The sequence spans 545 residues: Lysine--tRNA ligase (545 aa).

A 'HIGH' region motif is present at residues 33–41; it reads VSGLQHIGR. A 'KMSKS' region motif is present at residues 288-292; that stretch reads DMSSS.

It belongs to the class-I aminoacyl-tRNA synthetase family.

The protein resides in the cytoplasm. The enzyme catalyses tRNA(Lys) + L-lysine + ATP = L-lysyl-tRNA(Lys) + AMP + diphosphate. In Aeropyrum pernix (strain ATCC 700893 / DSM 11879 / JCM 9820 / NBRC 100138 / K1), this protein is Lysine--tRNA ligase (lysS).